Consider the following 236-residue polypeptide: Eukaryotic translation initiation factor 3 subunit J (236 aa).

The interval 1–84 (MADDWESAAD…RLEEEAEAQR (84 aa)) is disordered. Acidic residues predominate over residues 28–46 (GEDEDEDIKDSWEDEEEKK). Basic and acidic residues-rich tracts occupy residues 47–58 (DEEKPTKTEAPA) and 68–77 (AKLEQQARLE).

The protein belongs to the eIF-3 subunit J family. Component of the eukaryotic translation initiation factor 3 (eIF-3) complex. The eIF-3 complex interacts with pix.

Its subcellular location is the cytoplasm. Functionally, component of the eukaryotic translation initiation factor 3 (eIF-3) complex, which is involved in protein synthesis of a specialized repertoire of mRNAs and, together with other initiation factors, stimulates binding of mRNA and methionyl-tRNAi to the 40S ribosome. The eIF-3 complex specifically targets and initiates translation of a subset of mRNAs involved in cell proliferation. The sequence is that of Eukaryotic translation initiation factor 3 subunit J from Drosophila yakuba (Fruit fly).